The following is a 251-amino-acid chain: MTKLRLKSKDEIKKIKASASLLALTLLEVERNIVPGISTKELDLIAYDFIIKNRAKPAFKGYRGFKGTICASVNEEVIHGIPGKRKLADGDIVSIDCGVILDGFYSDMAKTFKVGNVDSSIDKLLEVTNASLYKGIAEMKVGNRILNISKAIEDYIKPFGFGIVREYTGHGVGFELHEEPSVPNYYAPFFKNIRIQEGMVLAIEPMVNLRGHKVSIKSDGWTVFASDLSYSAHFEHTVAVVDGLPLILSEV.

Residue H79 coordinates substrate. A divalent metal cation-binding residues include D96, D107, and H170. Substrate is bound at residue H177. The a divalent metal cation site is built by E204 and E235.

This sequence belongs to the peptidase M24A family. Methionine aminopeptidase type 1 subfamily. As to quaternary structure, monomer. Co(2+) serves as cofactor. It depends on Zn(2+) as a cofactor. Mn(2+) is required as a cofactor. Requires Fe(2+) as cofactor.

It catalyses the reaction Release of N-terminal amino acids, preferentially methionine, from peptides and arylamides.. Functionally, removes the N-terminal methionine from nascent proteins. The N-terminal methionine is often cleaved when the second residue in the primary sequence is small and uncharged (Met-Ala-, Cys, Gly, Pro, Ser, Thr, or Val). Requires deformylation of the N(alpha)-formylated initiator methionine before it can be hydrolyzed. In Borreliella burgdorferi (strain ATCC 35210 / DSM 4680 / CIP 102532 / B31) (Borrelia burgdorferi), this protein is Methionine aminopeptidase.